The primary structure comprises 123 residues: Sirohydrochlorin cobaltochelatase (123 aa).

Histidine 9 (proton acceptor) is an active-site residue. Residue histidine 9 coordinates Co(2+). Substrate-binding positions include glutamate 43 and 68-73; that span reads FAAGMH. Histidine 73 provides a ligand contact to Co(2+).

This sequence belongs to the CbiX family. CbiXS subfamily. As to quaternary structure, homotetramer; dimer of dimers.

It carries out the reaction Co-sirohydrochlorin + 2 H(+) = sirohydrochlorin + Co(2+). Its pathway is cofactor biosynthesis; adenosylcobalamin biosynthesis; cob(II)yrinate a,c-diamide from sirohydrochlorin (anaerobic route): step 1/10. In terms of biological role, catalyzes the insertion of Co(2+) into sirohydrochlorin as part of the anaerobic pathway to cobalamin biosynthesis. The protein is Sirohydrochlorin cobaltochelatase of Sulfolobus acidocaldarius (strain ATCC 33909 / DSM 639 / JCM 8929 / NBRC 15157 / NCIMB 11770).